Reading from the N-terminus, the 256-residue chain is Cilia- and flagella-associated protein 410 (256 aa).

3 LRR repeats span residues Ser-19–Pro-40, Ser-41–Gln-62, and Arg-63–Lys-84. One can recognise an LRRCT domain in the interval Asn-97–Glu-137. Disordered stretches follow at residues Glu-129–Lys-156 and Ala-168–Arg-212. Ser-136 and Ser-177 each carry phosphoserine.

In terms of assembly, found in a complex with CFAP410, NEK1 and SPATA7. Interacts with NEK1. As to expression, widely expressed. Expressed in the retina.

It is found in the mitochondrion. It localises to the cytoplasm. The protein localises to the cytoskeleton. The protein resides in the cilium basal body. Its subcellular location is the cell projection. It is found in the cilium. It localises to the photoreceptor outer segment. In terms of biological role, plays a role in cilia formation and/or maintenance. Plays a role in the regulation of cell morphology and cytoskeletal organization. Involved in DNA damage repair. The polypeptide is Cilia- and flagella-associated protein 410 (Homo sapiens (Human)).